The following is a 92-amino-acid chain: FMRFamide-like neuropeptides 16 (92 aa).

The signal sequence occupies residues 1 to 24 (MNFSGFEFSSIVAFFLLILQLSTA). The propeptide occupies 25–55 (AVLPADYAYGVADEMSALPDSGSLFAEQRPS). Residues Phe64, Phe74, and Phe84 each carry the phenylalanine amide modification. Residues 87 to 92 (SAPFEQ) constitute a propeptide that is removed on maturation.

It belongs to the FARP (FMRFamide related peptide) family. In terms of tissue distribution, each flp gene is expressed in a distinct set of neurons.

Its subcellular location is the secreted. Functionally, FMRFamides and FMRFamide-like peptides are neuropeptides. AQTFVRF-amide inhibits the activity of dissected pharyngeal myogenic muscle system. This chain is FMRFamide-like neuropeptides 16, found in Caenorhabditis elegans.